Here is a 396-residue protein sequence, read N- to C-terminus: S-adenosylmethionine synthase (396 aa).

Residue H16 coordinates ATP. D18 provides a ligand contact to Mg(2+). A K(+)-binding site is contributed by E44. Positions 57 and 100 each coordinate L-methionine. Positions Q100–E110 are flexible loop. ATP is bound by residues D175–K177, R242–F243, D251, R257–K258, A274, and K278. Residue D251 participates in L-methionine binding. K282 contacts L-methionine.

It belongs to the AdoMet synthase family. In terms of assembly, homotetramer; dimer of dimers. It depends on Mg(2+) as a cofactor. Requires K(+) as cofactor.

It is found in the cytoplasm. The catalysed reaction is L-methionine + ATP + H2O = S-adenosyl-L-methionine + phosphate + diphosphate. The protein operates within amino-acid biosynthesis; S-adenosyl-L-methionine biosynthesis; S-adenosyl-L-methionine from L-methionine: step 1/1. Functionally, catalyzes the formation of S-adenosylmethionine (AdoMet) from methionine and ATP. The overall synthetic reaction is composed of two sequential steps, AdoMet formation and the subsequent tripolyphosphate hydrolysis which occurs prior to release of AdoMet from the enzyme. This is S-adenosylmethionine synthase from Streptococcus suis (strain 05ZYH33).